The primary structure comprises 147 residues: Peptide methionine sulfoxide reductase MsrB 2 (147 aa).

The MsrB domain maps to 6 to 129 (TDEEVSKLTP…NSAALRFIPR (124 aa)). Cys-118 serves as the catalytic Nucleophile.

Belongs to the MsrB Met sulfoxide reductase family.

The enzyme catalyses L-methionyl-[protein] + [thioredoxin]-disulfide + H2O = L-methionyl-(R)-S-oxide-[protein] + [thioredoxin]-dithiol. This Rhizobium meliloti (strain 1021) (Ensifer meliloti) protein is Peptide methionine sulfoxide reductase MsrB 2 (msrB2).